The chain runs to 420 residues: 2,3-dimethylmalate dehydratase large subunit (420 aa).

C301, C361, and C364 together coordinate [4Fe-4S] cluster.

The protein belongs to the aconitase/IPM isomerase family. LeuC type 2 subfamily. In terms of assembly, heterodimer of a large and a small subunit. It depends on [4Fe-4S] cluster as a cofactor.

It catalyses the reaction (2R,3S)-2,3-dimethylmalate = dimethylmaleate + H2O. It functions in the pathway cofactor degradation; nicotinate degradation; propanoate and pyruvate from 6-hydroxynicotinate: step 7/8. This Eubacterium barkeri (Clostridium barkeri) protein is 2,3-dimethylmalate dehydratase large subunit (dmdA).